The sequence spans 144 residues: uncharacterized protein (144 aa).

Helical transmembrane passes span I10–P30 and Y60–V80.

It is found in the membrane. This is an uncharacterized protein from Saccharomyces cerevisiae (strain ATCC 204508 / S288c) (Baker's yeast).